The primary structure comprises 331 residues: B-box zinc finger protein 21 (331 aa).

Residues cysteine 5, cysteine 8, cysteine 28, histidine 34, cysteine 60, cysteine 63, cysteine 83, and histidine 93 each coordinate Zn(2+). The B box-type 1; atypical zinc finger occupies 5 to 47 (CDVCDKEEASVFCTADEASLCGGCDHQVHHANKLASKHLRFSL). Residues 60 to 102 (CDICQDKKALLFCQQDRAILCKDCDSSIHAANEHTKKHDRFLL) form a B box-type 2; atypical zinc finger. Low complexity-rich tracts occupy residues 115 to 126 (KPTSKSSSSSSS) and 228 to 238 (NNNNNNNNNNN). 2 disordered regions span residues 115–167 (KPTS…GGDA) and 209–241 (DDDG…NTVS).

In terms of assembly, interacts with COP1, HY5 and BBX32. Interacts with FLZ1.

It localises to the nucleus. Functionally, transcription activator that acts as a positive regulator of seedling photomorphogenesis. Acts downstream of COP1 and play an important role in early and long-term adjustment of the shade avoidance syndrome (SAS) responses in natural environments. The chain is B-box zinc finger protein 21 from Arabidopsis thaliana (Mouse-ear cress).